A 474-amino-acid polypeptide reads, in one-letter code: Glycogen synthase (474 aa).

Lys15 is an ADP-alpha-D-glucose binding site.

It belongs to the glycosyltransferase 1 family. Bacterial/plant glycogen synthase subfamily.

It catalyses the reaction [(1-&gt;4)-alpha-D-glucosyl](n) + ADP-alpha-D-glucose = [(1-&gt;4)-alpha-D-glucosyl](n+1) + ADP + H(+). It participates in glycan biosynthesis; glycogen biosynthesis. In terms of biological role, synthesizes alpha-1,4-glucan chains using ADP-glucose. The chain is Glycogen synthase from Chlamydia muridarum (strain MoPn / Nigg).